A 364-amino-acid chain; its full sequence is Dual-specificity RNA methyltransferase RlmN (364 aa).

The Proton acceptor role is filled by Glu-91. Residues Glu-97 to Asp-333 form the Radical SAM core domain. Residues Cys-104 and Cys-338 are joined by a disulfide bond. Cys-111, Cys-115, and Cys-118 together coordinate [4Fe-4S] cluster. Residues Gly-164–Glu-165, Ser-196, Ser-218–His-220, and Asn-295 each bind S-adenosyl-L-methionine. Catalysis depends on Cys-338, which acts as the S-methylcysteine intermediate.

This sequence belongs to the radical SAM superfamily. RlmN family. The cofactor is [4Fe-4S] cluster.

The protein localises to the cytoplasm. It catalyses the reaction adenosine(2503) in 23S rRNA + 2 reduced [2Fe-2S]-[ferredoxin] + 2 S-adenosyl-L-methionine = 2-methyladenosine(2503) in 23S rRNA + 5'-deoxyadenosine + L-methionine + 2 oxidized [2Fe-2S]-[ferredoxin] + S-adenosyl-L-homocysteine. The enzyme catalyses adenosine(37) in tRNA + 2 reduced [2Fe-2S]-[ferredoxin] + 2 S-adenosyl-L-methionine = 2-methyladenosine(37) in tRNA + 5'-deoxyadenosine + L-methionine + 2 oxidized [2Fe-2S]-[ferredoxin] + S-adenosyl-L-homocysteine. Specifically methylates position 2 of adenine 2503 in 23S rRNA and position 2 of adenine 37 in tRNAs. m2A2503 modification seems to play a crucial role in the proofreading step occurring at the peptidyl transferase center and thus would serve to optimize ribosomal fidelity. The chain is Dual-specificity RNA methyltransferase RlmN from Neisseria meningitidis serogroup C / serotype 2a (strain ATCC 700532 / DSM 15464 / FAM18).